The sequence spans 120 residues: NAD(P)H-quinone oxidoreductase subunit 3, chloroplastic (120 aa).

The next 3 membrane-spanning stretches (helical) occupy residues 14-34 (LIISILIPILAFLISGILAPI), 64-84 (MFALVFVVFDVETVFLYPWAM), and 88-108 (VLGVSVFIEALIFVLILIVGS).

The protein belongs to the complex I subunit 3 family. NDH is composed of at least 16 different subunits, 5 of which are encoded in the nucleus.

The protein resides in the plastid. The protein localises to the chloroplast thylakoid membrane. It catalyses the reaction a plastoquinone + NADH + (n+1) H(+)(in) = a plastoquinol + NAD(+) + n H(+)(out). The enzyme catalyses a plastoquinone + NADPH + (n+1) H(+)(in) = a plastoquinol + NADP(+) + n H(+)(out). Its function is as follows. NDH shuttles electrons from NAD(P)H:plastoquinone, via FMN and iron-sulfur (Fe-S) centers, to quinones in the photosynthetic chain and possibly in a chloroplast respiratory chain. The immediate electron acceptor for the enzyme in this species is believed to be plastoquinone. Couples the redox reaction to proton translocation, and thus conserves the redox energy in a proton gradient. This is NAD(P)H-quinone oxidoreductase subunit 3, chloroplastic from Cicer arietinum (Chickpea).